A 545-amino-acid polypeptide reads, in one-letter code: Periplasmic trehalase (545 aa).

The N-terminal stretch at 1-30 (MPDRTALPRAMLAAWVLLLLAACSQGPAPT) is a signal peptide. Residues Arg-160, 167 to 168 (WD), Asn-204, 213 to 215 (RSQ), 285 to 287 (RQE), and Gly-318 contribute to the substrate site. Catalysis depends on proton donor/acceptor residues Asp-320 and Glu-503. A substrate-binding site is contributed by Glu-518.

The protein belongs to the glycosyl hydrolase 37 family.

The protein resides in the periplasm. The enzyme catalyses alpha,alpha-trehalose + H2O = alpha-D-glucose + beta-D-glucose. Provides the cells with the ability to utilize trehalose at high osmolarity by splitting it into glucose molecules that can subsequently be taken up by the phosphotransferase-mediated uptake system. The polypeptide is Periplasmic trehalase (Pseudomonas aeruginosa (strain ATCC 15692 / DSM 22644 / CIP 104116 / JCM 14847 / LMG 12228 / 1C / PRS 101 / PAO1)).